The primary structure comprises 285 residues: Steroidogenic acute regulatory protein, mitochondrial (285 aa).

A mitochondrion-targeting transit peptide spans 1 to 63 (MLLATFKLCA…RRGSLLGSQL (63 aa)). Phosphoserine; by PKA is present on residues Ser57 and Ser195. Residues 67 to 280 (LYSDQELAYI…LRKRLESCPA (214 aa)) form the START domain.

May interact with TSPO.

Its subcellular location is the mitochondrion. It carries out the reaction cholesterol(in) = cholesterol(out). Its pathway is steroid metabolism; cholesterol metabolism. In terms of biological role, plays a key role in steroid hormone synthesis by enhancing the metabolism of cholesterol into pregnenolone. Mediates the transfer of cholesterol from the outer mitochondrial membrane to the inner mitochondrial membrane where it is cleaved to pregnenolone. This Ovis aries (Sheep) protein is Steroidogenic acute regulatory protein, mitochondrial (STAR).